The chain runs to 495 residues: ESX-2 secretion system ATPase EccB2 (495 aa).

The helical transmembrane segment at 43–63 (LALSMVLVAIAAGWMMLLNVL) threads the bilayer.

It belongs to the EccB family. In terms of assembly, part of the ESX-2 / type VII secretion system (T7SS), which is composed of cytosolic and membrane components.

It localises to the cell membrane. Functionally, an ATPase. The sequence is that of ESX-2 secretion system ATPase EccB2 (eccB2) from Mycobacterium tuberculosis (strain CDC 1551 / Oshkosh).